Reading from the N-terminus, the 1041-residue chain is Leucine-rich repeat receptor-like protein kinase TDR (1041 aa).

The first 29 residues, 1–29 (MKKKNISPSLVLHPLLLLLLPFFAFNSLA), serve as a signal peptide directing secretion. The Extracellular segment spans residues 30–652 (LKFSPQLLSL…HHKEERPKKT (623 aa)). C69 and C76 are joined by a disulfide. Residues N78, N92, and N111 are each glycosylated (N-linked (GlcNAc...) asparagine). LRR repeat units lie at residues 80–104 (TAQV…IRYL), 105–128 (SSLL…IFDL), 130–152 (KLTT…ISKL), 154–176 (FLKV…VSRL), 177–199 (RFLE…AYGG), 200–224 (LQRL…LGLL), 225–248 (TELQ…FALL), 250–272 (NLKY…LGNL), 273–296 (SNLE…YSNL), 297–319 (KSLK…GFST), 321–344 (KNLT…IGEL), 345–368 (PELT…LGSN), 369–392 (GKLE…LCHG), 394–416 (KLYK…LTRC), 418–439 (SLWR…GFGS), 440–464 (LRNL…FATA), 466–488 (VLQY…IWKA), 511–535 (CKSF…IGHC), 536–558 (EKLL…EIST), 559–583 (LPSI…FGSS), and 585–607 (TITT…SFAH). Positions 186 to 188 (GSY) are CLE peptide binding. A CLE peptide binding region spans residues 233 to 235 (GYN). N-linked (GlcNAc...) asparagine glycans are attached at residues N258 and N271. Positions 303–307 (DFSSN) are CLE peptide binding. Residues N322, N332, and N356 are each glycosylated (N-linked (GlcNAc...) asparagine). The segment at 375-377 (DVS) is CLE peptide binding. The N-linked (GlcNAc...) asparagine glycan is linked to N378. The cysteines at positions 390 and 416 are disulfide-linked. Residues 421 to 423 (RFR) form a CLE peptide binding region. Residues N430, N442, N471, N525, and N542 are each glycosylated (N-linked (GlcNAc...) asparagine). A disulfide bridge links C511 with C535. N-linked (GlcNAc...) asparagine glycosylation is present at N590. The cysteines at positions 620 and 628 are disulfide-linked. A helical membrane pass occupies residues 653–673 (AGAIVWILAAAIGVGFFVLVA). Over 674 to 1041 (ATRCFQKSYG…HDVKCQRIGV (368 aa)) the chain is Cytoplasmic. At T710 the chain carries Phosphothreonine. One can recognise a Protein kinase domain in the interval 719 to 1001 (SKTDNILGMG…DVLLILQEAK (283 aa)). ATP contacts are provided by residues 725–733 (LGMGSTGTV) and K747. 2 positions are modified to phosphotyrosine: Y798 and Y839. D852 acts as the Proton acceptor in catalysis. S884 bears the Phosphoserine mark. Phosphotyrosine occurs at positions 892 and 899. The residue at position 900 (T900) is a Phosphothreonine.

It belongs to the protein kinase superfamily. Ser/Thr protein kinase family. In terms of assembly, interacts specifically with the mature peptides CLE41p and CLE44p, especially in the presence of SERK2. Interacts with LURE1.2. Widely expressed along the vascular strands. In roots and hypocotyls, confined to procambial cells.

Its subcellular location is the cell membrane. The enzyme catalyses L-seryl-[protein] + ATP = O-phospho-L-seryl-[protein] + ADP + H(+). It catalyses the reaction L-threonyl-[protein] + ATP = O-phospho-L-threonyl-[protein] + ADP + H(+). In terms of biological role, acts with CLE41p and CLE44p peptides as a ligand-receptor pair in a signal transduction pathway involved in the regulation of procambium maintenance and polarity during vascular-tissue development. Mediates repression of tracheary element differentiation and the promotion of procambial cells formation and polar division adjacent to phloem cells in the veins. The chain is Leucine-rich repeat receptor-like protein kinase TDR from Arabidopsis thaliana (Mouse-ear cress).